The chain runs to 294 residues: Phosphoribosylaminoimidazole-succinocarboxamide synthase (294 aa).

It belongs to the SAICAR synthetase family.

It catalyses the reaction 5-amino-1-(5-phospho-D-ribosyl)imidazole-4-carboxylate + L-aspartate + ATP = (2S)-2-[5-amino-1-(5-phospho-beta-D-ribosyl)imidazole-4-carboxamido]succinate + ADP + phosphate + 2 H(+). Its pathway is purine metabolism; IMP biosynthesis via de novo pathway; 5-amino-1-(5-phospho-D-ribosyl)imidazole-4-carboxamide from 5-amino-1-(5-phospho-D-ribosyl)imidazole-4-carboxylate: step 1/2. In Rhodococcus jostii (strain RHA1), this protein is Phosphoribosylaminoimidazole-succinocarboxamide synthase.